Reading from the N-terminus, the 427-residue chain is L-cysteine:1D-myo-inositol 2-amino-2-deoxy-alpha-D-glucopyranoside ligase (427 aa).

Cys-46 provides a ligand contact to Zn(2+). Residues 46-49 (CGIT), Thr-61, and 84-86 (NVT) each bind L-cysteinyl-5'-AMP. Positions 48 to 58 (ITPYDATHMGH) match the 'HIGH' region motif. Positions 186 to 191 (ERGGDP) match the 'ERGGDP' region motif. Trp-233 is an L-cysteinyl-5'-AMP binding site. Residue Cys-237 participates in Zn(2+) binding. 255-257 (GSD) serves as a coordination point for L-cysteinyl-5'-AMP. Residue His-262 coordinates Zn(2+). Val-289 provides a ligand contact to L-cysteinyl-5'-AMP. A 'KMSKS' region motif is present at residues 295–299 (KMSKS).

This sequence belongs to the class-I aminoacyl-tRNA synthetase family. MshC subfamily. Monomer. It depends on Zn(2+) as a cofactor.

The enzyme catalyses 1D-myo-inositol 2-amino-2-deoxy-alpha-D-glucopyranoside + L-cysteine + ATP = 1D-myo-inositol 2-(L-cysteinylamino)-2-deoxy-alpha-D-glucopyranoside + AMP + diphosphate + H(+). Catalyzes the ATP-dependent condensation of GlcN-Ins and L-cysteine to form L-Cys-GlcN-Ins. This chain is L-cysteine:1D-myo-inositol 2-amino-2-deoxy-alpha-D-glucopyranoside ligase, found in Catenulispora acidiphila (strain DSM 44928 / JCM 14897 / NBRC 102108 / NRRL B-24433 / ID139908).